Here is a 255-residue protein sequence, read N- to C-terminus: Tritrans,polycis-undecaprenyl-diphosphate synthase (geranylgeranyl-diphosphate specific) (255 aa).

Residue Asp34 is part of the active site. Mg(2+) is bound at residue Asp34. Residues 35–38 (GNRR), His51, and 79–81 (STE) each bind substrate. The active-site Proton acceptor is the Asn82. Substrate is bound by residues Phe83, Arg85, Arg204, and 210 to 212 (RIS). Glu223 serves as a coordination point for Mg(2+).

It belongs to the UPP synthase family. As to quaternary structure, homodimer. It depends on Mg(2+) as a cofactor.

It carries out the reaction geranylgeranyl diphosphate + 7 isopentenyl diphosphate = tri-trans,hepta-cis-undecaprenyl diphosphate + 7 diphosphate. Catalyzes the sequential condensation of isopentenyl diphosphate (IPP) with geranylgeranyl diphosphate (GGPP) to yield (2Z,6Z,10Z,14Z,18Z,22Z,26Z,30E,34E,38E)-undecaprenyl diphosphate (tritrans,heptacis-UPP). It is probably the precursor of glycosyl carrier lipids. The chain is Tritrans,polycis-undecaprenyl-diphosphate synthase (geranylgeranyl-diphosphate specific) from Picrophilus torridus (strain ATCC 700027 / DSM 9790 / JCM 10055 / NBRC 100828 / KAW 2/3).